An 83-amino-acid polypeptide reads, in one-letter code: Acyl carrier protein (83 aa).

The region spanning serine 2 to histidine 77 is the Carrier domain. Residue serine 37 is modified to O-(pantetheine 4'-phosphoryl)serine.

The protein belongs to the acyl carrier protein (ACP) family. In terms of processing, 4'-phosphopantetheine is transferred from CoA to a specific serine of apo-ACP by AcpS. This modification is essential for activity because fatty acids are bound in thioester linkage to the sulfhydryl of the prosthetic group.

Its subcellular location is the cytoplasm. Its pathway is lipid metabolism; fatty acid biosynthesis. Carrier of the growing fatty acid chain in fatty acid biosynthesis. This Blochmanniella pennsylvanica (strain BPEN) protein is Acyl carrier protein.